The following is a 562-amino-acid chain: NAD-dependent malic enzyme (562 aa).

Residue Tyr101 is the Proton donor of the active site. Residue Arg154 participates in NAD(+) binding. Catalysis depends on Lys172, which acts as the Proton acceptor. The a divalent metal cation site is built by Glu243, Asp244, and Asp267. Asp267 and Asn415 together coordinate NAD(+).

The protein belongs to the malic enzymes family. Homotetramer. Mg(2+) serves as cofactor. It depends on Mn(2+) as a cofactor.

It carries out the reaction (S)-malate + NAD(+) = pyruvate + CO2 + NADH. The enzyme catalyses oxaloacetate + H(+) = pyruvate + CO2. This is NAD-dependent malic enzyme from Shewanella denitrificans (strain OS217 / ATCC BAA-1090 / DSM 15013).